The chain runs to 307 residues: tRNA dimethylallyltransferase (307 aa).

7 to 14 (GPTAGGKT) contacts ATP. 9–14 (TAGGKT) provides a ligand contact to substrate. Residues 32-35 (DSRQ) form an interaction with substrate tRNA region.

The protein belongs to the IPP transferase family. Monomer. Requires Mg(2+) as cofactor.

It carries out the reaction adenosine(37) in tRNA + dimethylallyl diphosphate = N(6)-dimethylallyladenosine(37) in tRNA + diphosphate. Functionally, catalyzes the transfer of a dimethylallyl group onto the adenine at position 37 in tRNAs that read codons beginning with uridine, leading to the formation of N6-(dimethylallyl)adenosine (i(6)A). In Elusimicrobium minutum (strain Pei191), this protein is tRNA dimethylallyltransferase.